The chain runs to 202 residues: LexA repressor (202 aa).

Positions 28–48 form a DNA-binding region, H-T-H motif; sequence RAEIASRLGFRSPNAAEEHLK. Active-site for autocatalytic cleavage activity residues include Ser119 and Lys156.

Belongs to the peptidase S24 family. In terms of assembly, homodimer.

The enzyme catalyses Hydrolysis of Ala-|-Gly bond in repressor LexA.. Represses a number of genes involved in the response to DNA damage (SOS response), including recA and lexA. Binds to the 16 bp palindromic sequence 5'-CTGTATATATATACAG-3'. In the presence of single-stranded DNA, RecA interacts with LexA causing an autocatalytic cleavage which disrupts the DNA-binding part of LexA, leading to derepression of the SOS regulon and eventually DNA repair. The sequence is that of LexA repressor from Sodalis glossinidius (strain morsitans).